A 338-amino-acid chain; its full sequence is Mitoferrin-1 (338 aa).

The segment at 1–37 is disordered; it reads MELRRGGVGSQAAGRRMDGDCRDGGCGSKDAGSEDYE. Solcar repeat units follow at residues 43 to 131, 141 to 225, and 232 to 326; these read ASVS…MKRT, NSHL…LQEQ, and YNPQ…FKYF. Helical transmembrane passes span 45-64, 106-125, 143-162, 200-219, 234-253, and 301-320; these read VSTH…SIMY, GLNV…FACY, HLAN…AVMN, SYTT…FITY, PQSH…AATT, and GIQA…WSVY.

This sequence belongs to the mitochondrial carrier (TC 2.A.29) family. In terms of assembly, interacts with ACB10; this interaction stabilizes SLC25A37 and enhances the function of SLC25A37 to import mitochondrial iron during erythroid differentiation.

The protein localises to the mitochondrion inner membrane. It carries out the reaction Fe(2+)(in) = Fe(2+)(out). In terms of biological role, mitochondrial iron transporter that specifically mediates iron uptake in developing erythroid cells, thereby playing an essential role in heme biosynthesis. The polypeptide is Mitoferrin-1 (Slc25a37) (Rattus norvegicus (Rat)).